Consider the following 71-residue polypeptide: Small ribosomal subunit protein bS21 (71 aa).

It belongs to the bacterial ribosomal protein bS21 family.

This is Small ribosomal subunit protein bS21 from Buchnera aphidicola subsp. Cinara cedri (strain Cc).